Here is a 251-residue protein sequence, read N- to C-terminus: MSVSPVSIVSTPVAVSASPAGAPDQPVQPVTVRWRGREAYEASFDAMRAFTDTRTADTGDEIWVVEHPPVYTLGQAGDPAHLLVADSGVPLVKVDRGGQITYHGPGQIVVYLLLDLRRRKLMVRALVTKIEEAVIETLAAYNLASVRKAGAPGIYVASGVHEGAKIAALGLKIRNGCSYHGLSLNVKMDLRPFLAINPCGYAGLETVDMASLEVAADWNDVAHTLVGRLIANLDGASAAADKPHALEQSND.

The BPL/LPL catalytic domain occupies 56–241 (ADTGDEIWVV…NLDGASAAAD (186 aa)). Substrate-binding positions include 96 to 103 (RGGQITYH), 168 to 170 (ALG), and 181 to 183 (GLS). Residue Cys199 is the Acyl-thioester intermediate of the active site.

Belongs to the LipB family.

Its subcellular location is the cytoplasm. It catalyses the reaction octanoyl-[ACP] + L-lysyl-[protein] = N(6)-octanoyl-L-lysyl-[protein] + holo-[ACP] + H(+). The protein operates within protein modification; protein lipoylation via endogenous pathway; protein N(6)-(lipoyl)lysine from octanoyl-[acyl-carrier-protein]: step 1/2. In terms of biological role, catalyzes the transfer of endogenously produced octanoic acid from octanoyl-acyl-carrier-protein onto the lipoyl domains of lipoate-dependent enzymes. Lipoyl-ACP can also act as a substrate although octanoyl-ACP is likely to be the physiological substrate. The protein is Octanoyltransferase of Burkholderia orbicola (strain AU 1054).